We begin with the raw amino-acid sequence, 157 residues long: Probable chemoreceptor glutamine deamidase CheD (157 aa).

This sequence belongs to the CheD family.

The enzyme catalyses L-glutaminyl-[protein] + H2O = L-glutamyl-[protein] + NH4(+). Its function is as follows. Probably deamidates glutamine residues to glutamate on methyl-accepting chemotaxis receptors (MCPs), playing an important role in chemotaxis. This chain is Probable chemoreceptor glutamine deamidase CheD, found in Archaeoglobus fulgidus (strain ATCC 49558 / DSM 4304 / JCM 9628 / NBRC 100126 / VC-16).